The chain runs to 555 residues: Wee1-like protein kinase 2-A (555 aa).

2 disordered regions span residues 1–81 (MRTA…SVGA) and 149–175 (FTPE…DCRT). Positions 38–48 (SPVSSWRTNNC) are enriched in polar residues. Residues 68–78 (SPSSDYSPDPS) are compositionally biased toward low complexity. The span at 149–160 (FTPESYRQTHFQ) shows a compositional bias: polar residues. The Protein kinase domain occupies 210-480 (FLEIEKIGAG…AASLAKNSVL (271 aa)). ATP contacts are provided by residues 216–224 (IGAGEFGSV) and Lys239. Asp337 serves as the catalytic Proton acceptor. Positions 342 and 374 each coordinate Mg(2+). Residues 487–513 (AAQLQKQLNVEKFKTAMLERELKAAKL) are a coiled coil. Phosphoserine is present on Ser549.

It belongs to the protein kinase superfamily. Ser/Thr protein kinase family. WEE1 subfamily. In terms of assembly, interacts with prmt5; this promotes protesomal degradation of wee2-a in the nucleus. The interaction with prmt5 is disrupted upon activation of the DNA replication checkpoint. Subject to proteasomal degradation in the nucleus. In terms of tissue distribution, detected in egg (at protein level). Oocyte-specific maternally supplied protein. Present in immature and mature oocytes and in early (pregastrula) embryos, but not in post-gastrula embryos.

The protein resides in the nucleus. It localises to the cytoplasm. The protein localises to the cytosol. It catalyses the reaction L-tyrosyl-[protein] + ATP = O-phospho-L-tyrosyl-[protein] + ADP + H(+). Functionally, oocyte-specific protein tyrosine kinase that phosphorylates and inhibits cdk1 and acts as a key regulator of meiosis. Required to maintain meiotic arrest in oocytes by phosphorylating cdk1 at 'Tyr-15', which inhibits cdk1 activity and prevents meiotic reentry. Negative regulator of mitosis. Involved in the mitotic DNA replication checkpoint. The sequence is that of Wee1-like protein kinase 2-A (wee2-a) from Xenopus laevis (African clawed frog).